The sequence spans 101 residues: MAKKSAIETNERRRKLSQSKAAKRASLKAIVNDKTLPIEERFAATLKLAQMPRNSAKIRVRNRCEVTGRPRAFYRKLKMSRVALRELGSQGLVPGLVKSSW.

Basic and acidic residues predominate over residues 1-11 (MAKKSAIETNE). The segment at 1-24 (MAKKSAIETNERRRKLSQSKAAKR) is disordered. Basic residues predominate over residues 12-24 (RRRKLSQSKAAKR).

It belongs to the universal ribosomal protein uS14 family. Part of the 30S ribosomal subunit. Contacts proteins S3 and S10.

Functionally, binds 16S rRNA, required for the assembly of 30S particles and may also be responsible for determining the conformation of the 16S rRNA at the A site. This Azorhizobium caulinodans (strain ATCC 43989 / DSM 5975 / JCM 20966 / LMG 6465 / NBRC 14845 / NCIMB 13405 / ORS 571) protein is Small ribosomal subunit protein uS14.